Consider the following 438-residue polypeptide: GTPase Obg (438 aa).

Residues 2-160 form the Obg domain; the sequence is SMFLDQVTID…RKIELELKVL (159 aa). A disordered region spans residues 128–147; it reads NIRFASPRNPAPEIAENGEP. The 179-residue stretch at 161–339 folds into the OBG-type G domain; sequence ADVGLVGFPS…LLNATADLLE (179 aa). Residues 167-174, 192-196, 214-217, 284-287, and 320-322 each bind GTP; these read GFPSVGKS, FTTLV, DLPG, NKMD, and SGV. Positions 174 and 194 each coordinate Mg(2+). The region spanning 360-438 is the OCT domain; it reads GFQPEGPEFT…IGNFEFEFVE (79 aa).

It belongs to the TRAFAC class OBG-HflX-like GTPase superfamily. OBG GTPase family. Monomer. It depends on Mg(2+) as a cofactor.

It localises to the cytoplasm. An essential GTPase which binds GTP, GDP and possibly (p)ppGpp with moderate affinity, with high nucleotide exchange rates and a fairly low GTP hydrolysis rate. Plays a role in control of the cell cycle, stress response, ribosome biogenesis and in those bacteria that undergo differentiation, in morphogenesis control. This Enterococcus faecalis (strain ATCC 700802 / V583) protein is GTPase Obg.